The primary structure comprises 274 residues: Diaminopimelate epimerase (274 aa).

Residues Asn-11, Gln-44, and Asn-64 each contribute to the substrate site. Catalysis depends on Cys-73, which acts as the Proton donor. Substrate is bound by residues 74-75 (GN), Asn-157, Asn-190, and 208-209 (ER). The Proton acceptor role is filled by Cys-217. Substrate is bound at residue 218 to 219 (GS).

Belongs to the diaminopimelate epimerase family. Homodimer.

It localises to the cytoplasm. The enzyme catalyses (2S,6S)-2,6-diaminopimelate = meso-2,6-diaminopimelate. It functions in the pathway amino-acid biosynthesis; L-lysine biosynthesis via DAP pathway; DL-2,6-diaminopimelate from LL-2,6-diaminopimelate: step 1/1. Its function is as follows. Catalyzes the stereoinversion of LL-2,6-diaminopimelate (L,L-DAP) to meso-diaminopimelate (meso-DAP), a precursor of L-lysine and an essential component of the bacterial peptidoglycan. The sequence is that of Diaminopimelate epimerase from Escherichia fergusonii (strain ATCC 35469 / DSM 13698 / CCUG 18766 / IAM 14443 / JCM 21226 / LMG 7866 / NBRC 102419 / NCTC 12128 / CDC 0568-73).